Reading from the N-terminus, the 426-residue chain is Protein TolB homolog (426 aa).

Positions 1-19 (MFLRSFLCLLCLLPSILYC) are cleaved as a signal peptide.

The protein belongs to the TolB family.

It localises to the periplasm. This Chlamydia muridarum (strain MoPn / Nigg) protein is Protein TolB homolog.